The sequence spans 124 residues: Prefoldin subunit beta (124 aa).

The protein belongs to the prefoldin subunit beta family. Heterohexamer of two alpha and four beta subunits.

Its subcellular location is the cytoplasm. Its function is as follows. Molecular chaperone capable of stabilizing a range of proteins. Seems to fulfill an ATP-independent, HSP70-like function in archaeal de novo protein folding. The sequence is that of Prefoldin subunit beta (pfdB) from Thermoplasma acidophilum (strain ATCC 25905 / DSM 1728 / JCM 9062 / NBRC 15155 / AMRC-C165).